Reading from the N-terminus, the 330-residue chain is Ribosomal RNA small subunit methyltransferase C (330 aa).

Belongs to the methyltransferase superfamily. RsmC family. Monomer.

Its subcellular location is the cytoplasm. It catalyses the reaction guanosine(1207) in 16S rRNA + S-adenosyl-L-methionine = N(2)-methylguanosine(1207) in 16S rRNA + S-adenosyl-L-homocysteine + H(+). Specifically methylates the guanine in position 1207 of 16S rRNA in the 30S particle. This Haemophilus influenzae (strain 86-028NP) protein is Ribosomal RNA small subunit methyltransferase C.